Here is a 425-residue protein sequence, read N- to C-terminus: Protein upregulated in glial subsets pugs-5 (425 aa).

Over residues 355-373 (NNNDVEKSTQIEKKPEKQG) the composition is skewed to basic and acidic residues. The segment at 355–407 (NNNDVEKSTQIEKKPEKQGPEIQEEVVEMETVKDEQPPKTSAVRFKENSPRLM) is disordered.

The chain is Protein upregulated in glial subsets pugs-5 from Caenorhabditis elegans.